The primary structure comprises 479 residues: ATP synthase subunit beta (479 aa).

160–167 (GGAGVGKT) is a binding site for ATP.

This sequence belongs to the ATPase alpha/beta chains family. In terms of assembly, F-type ATPases have 2 components, CF(1) - the catalytic core - and CF(0) - the membrane proton channel. CF(1) has five subunits: alpha(3), beta(3), gamma(1), delta(1), epsilon(1). CF(0) has three main subunits: a(1), b(2) and c(9-12). The alpha and beta chains form an alternating ring which encloses part of the gamma chain. CF(1) is attached to CF(0) by a central stalk formed by the gamma and epsilon chains, while a peripheral stalk is formed by the delta and b chains.

It is found in the cell inner membrane. The catalysed reaction is ATP + H2O + 4 H(+)(in) = ADP + phosphate + 5 H(+)(out). Its function is as follows. Produces ATP from ADP in the presence of a proton gradient across the membrane. The catalytic sites are hosted primarily by the beta subunits. This chain is ATP synthase subunit beta, found in Anaplasma phagocytophilum (strain HZ).